We begin with the raw amino-acid sequence, 87 residues long: Small ribosomal subunit protein bS20 (87 aa).

Positions 1 to 23 (MANHKSAIKRHKQSVKRAARNRA) are disordered.

The protein belongs to the bacterial ribosomal protein bS20 family.

Binds directly to 16S ribosomal RNA. The polypeptide is Small ribosomal subunit protein bS20 (Oleidesulfovibrio alaskensis (strain ATCC BAA-1058 / DSM 17464 / G20) (Desulfovibrio alaskensis)).